A 247-amino-acid polypeptide reads, in one-letter code: MAATSDEQMNLLLSSFDQIYEDFKIGLNEINVYRSKSNVESSRREVLEISNKNLKEENERLKKLYTESLNNFADQLEHRTKCHSLKEELKRVNDENKSKEHEHRNALESLRQKHVTKVEELEYKIRSLLVEKATNDMVIDRLRQDLTANKSHIQAMSKKLDRVVTEVECKYELEIQDLKDCLLMEQAEKNDISNKLQSLQKELLISRTSIAEKQRDTTSNRQVETLKQKLMKLRKENEILKRKLSSS.

Coiled-coil stretches lie at residues 39–126 (VESS…YKIR) and 182–247 (LLME…LSSS).

As to quaternary structure, interacts with viral tomato spotted wilt virus (TSWV) movement protein NSM, which is involved in cell-to cell spread of viral genome and enlargement of the host plasmodesmata size exclusion limit (SEL). Expressed in leaves (at protein level).

Its subcellular location is the endoplasmic reticulum. It is found in the cell junction. It localises to the plasmodesma. In terms of biological role, involved in intra- and inter-cellular trafficking through plasmodesmata (PD). This chain is Protein At-4/1, found in Arabidopsis thaliana (Mouse-ear cress).